The chain runs to 147 residues: Hemoglobin subunit gamma-2 (147 aa).

The Globin domain maps to 3–147; that stretch reads HFTEEDKATI…VASALSSRYH (145 aa). The residue at position 13 (threonine 13) is a Phosphothreonine. Phosphoserine is present on residues serine 45, serine 51, and serine 53. An N6-acetyllysine modification is found at lysine 60. Residue histidine 64 coordinates heme b. Lysine 83 bears the N6-acetyllysine mark. Residue histidine 93 coordinates heme b. Position 94 is an S-nitrosocysteine (cysteine 94). Phosphoserine occurs at positions 140, 143, and 144.

It belongs to the globin family. In terms of assembly, heterotetramer of two alpha chains and two gamma chains in fetal hemoglobin (Hb F). As to expression, red blood cells.

Its function is as follows. Gamma chains make up the fetal hemoglobin F, in combination with alpha chains. The protein is Hemoglobin subunit gamma-2 (HBG2) of Gorilla gorilla gorilla (Western lowland gorilla).